The sequence spans 252 residues: MDVKSVLSNAFAMPITSPAFPMGPYRFINREFLIITYRTDPDKLRAVVPEPLEIGEPLVHYEFIRMPDSTGFGDYTESGQVIPVSYKGVAGGYTLAMYLDDHPPIAGGRELWGFPKKLANPVLAVHTDTLVGTLDYGPVRIATGTMGYKHRQLDLAQQKKRLETPNFLLKVIPHVDGTPRICELVRYYLQDIDLKGAWTGPAALELAPHALAPVAALPVLEVVEARHLIADLTLGLGEVVFDYLGQPQANAR.

Lys116 (schiff-base intermediate with acetoacetate) is an active-site residue.

Belongs to the ADC family.

The catalysed reaction is acetoacetate + H(+) = acetone + CO2. Catalyzes the conversion of acetoacetate to acetone and carbon dioxide. This is Acetoacetate decarboxylase from Paraburkholderia xenovorans (strain LB400).